A 231-amino-acid polypeptide reads, in one-letter code: Quercetin 2,3-dioxygenase (231 aa).

A divalent metal cation contacts are provided by H57, H59, H101, and E103.

It belongs to the pirin family. Zn(2+) serves as cofactor. Co(2+) is required as a cofactor. It depends on Fe(2+) as a cofactor.

It catalyses the reaction quercetin + O2 = 2-(3,4-dihydroxybenzoyloxy)-4,6-dihydroxybenzoate + CO. It functions in the pathway flavonoid metabolism; quercetin degradation. Inhibited by kojic acid, sodium diethyldithiocarbamate and 1,10-phenanthroline monohydrochloride. Its function is as follows. Has quercetin 2,3-dioxygenase activity in vitro. Its physiological role is unknown; however, may provide a mechanism that would avoid inhibition of key cellular proteins, such as DNA gyrase, by quercetin. The chain is Quercetin 2,3-dioxygenase (yhhW) from Escherichia coli (strain K12).